The chain runs to 297 residues: Phosphoribosylaminoimidazole-succinocarboxamide synthase (297 aa).

It belongs to the SAICAR synthetase family.

The enzyme catalyses 5-amino-1-(5-phospho-D-ribosyl)imidazole-4-carboxylate + L-aspartate + ATP = (2S)-2-[5-amino-1-(5-phospho-beta-D-ribosyl)imidazole-4-carboxamido]succinate + ADP + phosphate + 2 H(+). It functions in the pathway purine metabolism; IMP biosynthesis via de novo pathway; 5-amino-1-(5-phospho-D-ribosyl)imidazole-4-carboxamide from 5-amino-1-(5-phospho-D-ribosyl)imidazole-4-carboxylate: step 1/2. The sequence is that of Phosphoribosylaminoimidazole-succinocarboxamide synthase from Corynebacterium glutamicum (strain ATCC 13032 / DSM 20300 / JCM 1318 / BCRC 11384 / CCUG 27702 / LMG 3730 / NBRC 12168 / NCIMB 10025 / NRRL B-2784 / 534).